Reading from the N-terminus, the 378-residue chain is Opsin Rh4 (378 aa).

Topologically, residues 1–53 are extracellular; the sequence is MEPLCNASEPPLRPEARSSGNGDLQFLGWNVPPDQIQYIPEHWLTQLEPPASM. An N-linked (GlcNAc...) asparagine glycan is attached at Asn6. The chain crosses the membrane as a helical span at residues 54–78; it reads HYMLGVFYIFLFCASTVGNGMVIWI. The Cytoplasmic segment spans residues 79–90; it reads FSTSKSLRTPSN. The helical transmembrane segment at 91 to 111 threads the bilayer; sequence MFVLNLAVFDLIMCLKAPIFI. The Extracellular portion of the chain corresponds to 112–127; that stretch reads YNSFHRGFALGNTWCQ. An intrachain disulfide couples Cys126 to Cys203. The chain crosses the membrane as a helical span at residues 128–148; sequence IFASIGSYSGIGAGMTNAAIG. The Cytoplasmic segment spans residues 149 to 167; it reads YDRYNVITKPMNRNMTFTK. A helical transmembrane segment spans residues 168–192; that stretch reads AVIMNIIIWLYCTPWVVLPLTQFWD. Topologically, residues 193 to 216 are extracellular; sequence RFVPEGYLTSCSFDYLSDNFDTRL. The chain crosses the membrane as a helical span at residues 217–244; it reads FVGTIFFFSFVCPTLMILYYYSQIVGHV. The Cytoplasmic segment spans residues 245–280; sequence FSHEKALREQAKKMNVESLRSNVDKSKETAEIRIAK. A helical membrane pass occupies residues 281-304; that stretch reads AAITICFLFFVSWTPYGVMSLIGA. Over 305–312 the chain is Extracellular; sequence FGDKSLLT. The helical transmembrane segment at 313-337 threads the bilayer; it reads PGATMIPACTCKLVACIDPFVYAIS. An N6-(retinylidene)lysine modification is found at Lys324. Topologically, residues 338–378 are cytoplasmic; sequence HPRYRLELQKRCPWLGVNEKSGEISSAQSTTTQEQQQTTAA.

It belongs to the G-protein coupled receptor 1 family. Opsin subfamily. In terms of processing, phosphorylated on some or all of the serine and threonine residues present in the C-terminal region.

The protein localises to the membrane. Visual pigments are the light-absorbing molecules that mediate vision. They consist of an apoprotein, opsin, covalently linked to cis-retinal. This chain is Opsin Rh4 (Rh4), found in Drosophila melanogaster (Fruit fly).